The following is a 136-amino-acid chain: Nucleoside diphosphate kinase (136 aa).

Lys10, Phe58, Arg86, Thr92, Arg104, and Asn114 together coordinate ATP. His117 serves as the catalytic Pros-phosphohistidine intermediate.

This sequence belongs to the NDK family. As to quaternary structure, homotetramer. The cofactor is Mg(2+).

It localises to the cytoplasm. The catalysed reaction is a 2'-deoxyribonucleoside 5'-diphosphate + ATP = a 2'-deoxyribonucleoside 5'-triphosphate + ADP. It carries out the reaction a ribonucleoside 5'-diphosphate + ATP = a ribonucleoside 5'-triphosphate + ADP. Major role in the synthesis of nucleoside triphosphates other than ATP. The ATP gamma phosphate is transferred to the NDP beta phosphate via a ping-pong mechanism, using a phosphorylated active-site intermediate. The chain is Nucleoside diphosphate kinase from Corynebacterium diphtheriae (strain ATCC 700971 / NCTC 13129 / Biotype gravis).